The sequence spans 567 residues: Glucose-6-phosphate isomerase, cytosolic A (567 aa).

D-glucose 6-phosphate-binding positions include 156–157, 212–217, Q356, E360, H391, and K516; these read GS and SKTFTT. Catalysis depends on E360, which acts as the Proton donor. Active-site residues include H391 and K516.

The protein belongs to the GPI family. Homodimer.

It localises to the cytoplasm. The catalysed reaction is alpha-D-glucose 6-phosphate = beta-D-fructose 6-phosphate. Its pathway is carbohydrate degradation; glycolysis; D-glyceraldehyde 3-phosphate and glycerone phosphate from D-glucose: step 2/4. Catalyzes the conversion of glucose-6-phosphate to fructose-6-phosphate, the second step in glycolysis, and the reverse reaction during gluconeogenesis. In Oryza sativa subsp. japonica (Rice), this protein is Glucose-6-phosphate isomerase, cytosolic A.